Reading from the N-terminus, the 361-residue chain is Phosphoserine aminotransferase (361 aa).

Arginine 42 lines the L-glutamate pocket. Residues 76–77, tryptophan 102, threonine 152, aspartate 172, and glutamine 195 contribute to the pyridoxal 5'-phosphate site; that span reads AT. Lysine 196 is subject to N6-(pyridoxal phosphate)lysine. Residue 237 to 238 coordinates pyridoxal 5'-phosphate; sequence NT.

The protein belongs to the class-V pyridoxal-phosphate-dependent aminotransferase family. SerC subfamily. In terms of assembly, homodimer. Requires pyridoxal 5'-phosphate as cofactor.

It is found in the cytoplasm. The enzyme catalyses O-phospho-L-serine + 2-oxoglutarate = 3-phosphooxypyruvate + L-glutamate. It catalyses the reaction 4-(phosphooxy)-L-threonine + 2-oxoglutarate = (R)-3-hydroxy-2-oxo-4-phosphooxybutanoate + L-glutamate. It participates in amino-acid biosynthesis; L-serine biosynthesis; L-serine from 3-phospho-D-glycerate: step 2/3. Its pathway is cofactor biosynthesis; pyridoxine 5'-phosphate biosynthesis; pyridoxine 5'-phosphate from D-erythrose 4-phosphate: step 3/5. Its function is as follows. Catalyzes the reversible conversion of 3-phosphohydroxypyruvate to phosphoserine and of 3-hydroxy-2-oxo-4-phosphonooxybutanoate to phosphohydroxythreonine. This is Phosphoserine aminotransferase from Xanthomonas euvesicatoria pv. vesicatoria (strain 85-10) (Xanthomonas campestris pv. vesicatoria).